The sequence spans 516 residues: Prolyl 4-hydroxylase subunit alpha-1 (516 aa).

N-linked (GlcNAc...) asparagine glycosylation is present at asparagine 97. One copy of the TPR repeat lies at valine 189–histidine 222. An N-linked (GlcNAc...) asparagine glycan is attached at asparagine 243. Residues threonine 393–glutamate 501 enclose the Fe2OG dioxygenase domain. Residues histidine 411, aspartate 413, and histidine 482 each contribute to the Fe cation site. A 2-oxoglutarate-binding site is contributed by lysine 492.

It belongs to the P4HA family. In terms of assembly, heterotetramer of two alpha chains and two beta chains (the beta chain is the multi-functional PDI). The cofactor is Fe(2+). Requires L-ascorbate as cofactor.

It localises to the endoplasmic reticulum lumen. It carries out the reaction L-prolyl-[collagen] + 2-oxoglutarate + O2 = trans-4-hydroxy-L-prolyl-[collagen] + succinate + CO2. In terms of biological role, catalyzes the post-translational formation of 4-hydroxyproline in -Xaa-Pro-Gly- sequences in collagens and other proteins. The polypeptide is Prolyl 4-hydroxylase subunit alpha-1 (P4HA1) (Gallus gallus (Chicken)).